Consider the following 366-residue polypeptide: MYHVPEMRLHYPLVNTQSNAAITPTRSYDNTLPSFNELSHQSTINLPFVQRETPNAYANVAQLATSPTQAKSGYYCRYYAVPFPTYPQQPQSPYQQAVLPYATIPNSNFQPSSFPVMAVMPPEVQFDGSFLNTLHPHTELPPIIQNTNDTSVARPNNLKSIAAASPTVTATTRTPGVSSTSVLKPRVITTMWEDENTICYQVEANGISVVRRADNNMINGTKLLNVTKMTRGRRDGILRSEKVREVVKIGSMHLKGVWIPFERAYILAQREQILDHLYPLFVKDIESIVDARKPSNKASLTPKSSPAPIKQEPSDNKHEIATEIKPKSIDALSNGASTQGAGELPHLKINHIDTEAQTSRAKNELS.

The HTH APSES-type domain maps to arginine 186–arginine 292. A DNA-binding region (H-T-H motif) is located at residues glycine 220–glutamate 241. The segment at proline 294 to serine 366 is disordered. Basic and acidic residues predominate over residues glutamate 312–serine 328.

The protein belongs to the EFG1/PHD1/stuA family.

It localises to the nucleus. Putative transcription factor that functions in pseudohyphal growth. This Saccharomyces cerevisiae (strain ATCC 204508 / S288c) (Baker's yeast) protein is Putative transcription factor PHD1 (PHD1).